Consider the following 93-residue polypeptide: Pyrimidine/purine nucleoside phosphorylase (93 aa).

This sequence belongs to the nucleoside phosphorylase PpnP family.

It carries out the reaction a purine D-ribonucleoside + phosphate = a purine nucleobase + alpha-D-ribose 1-phosphate. The enzyme catalyses adenosine + phosphate = alpha-D-ribose 1-phosphate + adenine. It catalyses the reaction cytidine + phosphate = cytosine + alpha-D-ribose 1-phosphate. The catalysed reaction is guanosine + phosphate = alpha-D-ribose 1-phosphate + guanine. It carries out the reaction inosine + phosphate = alpha-D-ribose 1-phosphate + hypoxanthine. The enzyme catalyses thymidine + phosphate = 2-deoxy-alpha-D-ribose 1-phosphate + thymine. It catalyses the reaction uridine + phosphate = alpha-D-ribose 1-phosphate + uracil. The catalysed reaction is xanthosine + phosphate = alpha-D-ribose 1-phosphate + xanthine. Functionally, catalyzes the phosphorolysis of diverse nucleosides, yielding D-ribose 1-phosphate and the respective free bases. Can use uridine, adenosine, guanosine, cytidine, thymidine, inosine and xanthosine as substrates. Also catalyzes the reverse reactions. The sequence is that of Pyrimidine/purine nucleoside phosphorylase from Pseudomonas paraeruginosa (strain DSM 24068 / PA7) (Pseudomonas aeruginosa (strain PA7)).